A 208-amino-acid chain; its full sequence is Large ribosomal subunit protein bL25 (208 aa).

The segment at 1 to 20 (MANHQIKAQRRKDEGKGASR) is disordered.

Belongs to the bacterial ribosomal protein bL25 family. CTC subfamily. In terms of assembly, part of the 50S ribosomal subunit; part of the 5S rRNA/L5/L18/L25 subcomplex. Contacts the 5S rRNA. Binds to the 5S rRNA independently of L5 and L18.

Functionally, this is one of the proteins that binds to the 5S RNA in the ribosome where it forms part of the central protuberance. The chain is Large ribosomal subunit protein bL25 from Xylella fastidiosa (strain 9a5c).